Consider the following 667-residue polypeptide: Single-minded homolog 2 (667 aa).

In terms of domain architecture, bHLH spans 1-53 (MKEKSKNAAKTRREKENGEFYELAKLLPLPSAITSQLDKASIIRLTTSYLKMR). PAS domains follow at residues 77–149 (AKEL…LHHH) and 218–288 (PPSA…LVKG). One can recognise a PAC domain in the interval 292–335 (TKYYRLLSKRGGWVWVQSYATVVHNSRSSRPHCIVSVNYVLTEI). Positions 336-667 (EYKELQLSLE…GASVIITNGR (332 aa)) constitute a Single-minded C-terminal domain. Disordered regions lie at residues 356–389 (WRTA…YPPQ), 409–428 (ASPP…SESS), and 500–520 (SSSS…RHSL). Residues 367 to 386 (RKLVKPKNTKMKTKLRTNPY) carry the Nuclear localization signal motif. Over residues 369–381 (LVKPKNTKMKTKL) the composition is skewed to basic residues. Residues 409-419 (ASPPASAAAPP) are compositionally biased toward low complexity.

As to quaternary structure, efficient DNA binding requires dimerization with another bHLH protein. Heterodimer of SIM2 and ARNT.

The protein resides in the nucleus. Transcription factor that may be a master gene of CNS development in cooperation with Arnt. It may have pleiotropic effects in the tissues expressed during development. This is Single-minded homolog 2 (SIM2) from Homo sapiens (Human).